A 455-amino-acid polypeptide reads, in one-letter code: Chromosomal replication initiator protein DnaA (455 aa).

The domain I, interacts with DnaA modulators stretch occupies residues 1 to 75; it reads MDTNNNIEKE…EILSQNKVGM (75 aa). Residues 75 to 106 form a domain II region; the sequence is MHLAHSVDVRIEVAPKIQINAQANINYKAIKT. The tract at residues 107-321 is domain III, AAA+ region; the sequence is SVKDSYTFEN…GAIIKISVNA (215 aa). G151, G153, K154, and T155 together coordinate ATP. The segment at 322 to 455 is domain IV, binds dsDNA; it reads NLMNAPIDLN…DKKTAFNSSE (134 aa).

The protein belongs to the DnaA family. As to quaternary structure, oligomerizes as a right-handed, spiral filament on DNA at oriC.

It is found in the cytoplasm. Functionally, plays an essential role in the initiation and regulation of chromosomal replication. ATP-DnaA binds to the origin of replication (oriC) to initiate formation of the DNA replication initiation complex once per cell cycle. Binds the DnaA box (a 9 base pair repeat at the origin) and separates the double-stranded (ds)DNA. Forms a right-handed helical filament on oriC DNA; dsDNA binds to the exterior of the filament while single-stranded (ss)DNA is stabiized in the filament's interior. The ATP-DnaA-oriC complex binds and stabilizes one strand of the AT-rich DNA unwinding element (DUE), permitting loading of DNA polymerase. After initiation quickly degrades to an ADP-DnaA complex that is not apt for DNA replication. Binds acidic phospholipids. This is Chromosomal replication initiator protein DnaA from Helicobacter pylori (strain G27).